The following is a 166-amino-acid chain: MDMTNAQRLILSNQYYLMSQMDPANAEKYKRQQLIVERGYELQIRELDKDFGCITETECREIIDFMEMYHAMQESYNMLSEECQAKVDARRLQFLGFDIATEAQQVNYVRFLTSSEGLYPQFDKADHHFNSQMPMLDKYRRMLTTWRNCPRQYHLCSTELAQIFNA.

The protein belongs to the UPF0304 family.

This is UPF0304 protein VFMJ11_1926 from Aliivibrio fischeri (strain MJ11) (Vibrio fischeri).